The sequence spans 1203 residues: MVLLLILSVLLLKEDVRGSAQSSERRVVAHMPGDIIIGALFSVHHQPTVDKVHERKCGAVREQYGIQRVEAMLHTLERINSDPTLLPNITLGCEIRDSCWHSAVALEQSIEFIRDSLISSEEEEGLVRCVDGSSSFRSKKPIVGVIGPGSSSVAIQVQNLLQLFNIPQIAYSATSMDLSDKTLFKYFMRVVPSDAQQARAMVDIVKRYNWTYVSAVHTEGNYGESGMEAFKDMSAKEGICIAHSYKIYSNAGEQSFDKLLKKLRSHLPKARVVACFCEGMTVRGLLMAMRRLGLAGEFLLLGSDGWADRYDVTDGYQREAVGGITIKLQSPDVKWFDDYYLKLRPETNLRNPWFQEFWQHRFQCRLEGFAQENSKYNKTCNSSLTLRTHHVQDSKMGFVINAIYSMAYGLHNMQMSLCPGYAGLCDAMKPIDGRKLLDSLMKTNFTGVSGDMILFDENGDSPGRYEIMNFKEMGKDYFDYINVGSWDNGELKMDDDEVWSKKNNIIRSVCSEPCEKGQIKVIRKGEVSCCWTCTPCKENEYVFDEYTCKACQLGSWPTDDLTGCDLIPVQYLRWGDPEPIAAVVFACLGLLATLFVTVIFIIYRDTPVVKSSSRELCYIILAGICLGYLCTFCLIAKPKQIYCYLQRIGIGLSPAMSYSALVTKTNRIARILAGSKKKICTKKPRFMSACAQLVIAFILICIQLGIIVALFIMEPPDIMHDYPSIREVYLICNTTNLGVVTPLGYNGLLILSCTFYAFKTRNVPANFNEAKYIAFTMYTTCIIWLAFVPIYFGSNYKIITMCFSVSLSATVALGCMFVPKVYIILAKPERNVRSAFTTSTVVRMHVGDGKSSSAASRSSSLVNLWKRRGSSGETLRYKDRRLAQHKSEIECFTPKGSMGNGGRATMSSSNGKSVTWAQNEKSTRGQHLWQRLSVHINKKENPNQTAVIKPFPKSTENRGPGAAAGGGSGPGVAGAGNAGCTATGGPEPPDAGPKALYDVAEAEESFPAAARPRSPSPISTLSHLAGSAGRTDDDAPSLHSETAARSSSSQGSLMEQISSVVTRFTANISELNSMMLSTAATPGPPGTPICSSYLIPKEIQLPTTMTTFAEIQPLPAIEVTGGAQGATGVSPAQETPTGAESAPGKPDLEELVALTPPSPFRDSVDSGSTTPNSPVSESALCIPSSPKYDTLIIRDYTQSSSSL.

Residues 1–20 (MVLLLILSVLLLKEDVRGSA) form the signal peptide. Over 21–579 (QSSERRVVAH…QYLRWGDPEP (559 aa)) the chain is Extracellular. Cysteine 57 and cysteine 99 form a disulfide bridge. Tyrosine 64 is a binding site for L-glutamate. Residue asparagine 88 is glycosylated (N-linked (GlcNAc...) asparagine). L-glutamate is bound by residues serine 151 and 172–174 (SAT). Residue asparagine 209 is glycosylated (N-linked (GlcNAc...) asparagine). Residue tyrosine 222 participates in L-glutamate binding. Intrachain disulfides connect cysteine 240/cysteine 529, cysteine 275/cysteine 277, cysteine 364/cysteine 380, cysteine 418/cysteine 425, cysteine 510/cysteine 530, cysteine 514/cysteine 533, cysteine 536/cysteine 548, and cysteine 551/cysteine 564. Aspartate 304 lines the L-glutamate pocket. Residues asparagine 377 and asparagine 381 are each glycosylated (N-linked (GlcNAc...) asparagine). Lysine 395 is an L-glutamate binding site. Asparagine 444 carries an N-linked (GlcNAc...) asparagine glycan. A helical membrane pass occupies residues 580 to 602 (IAAVVFACLGLLATLFVTVIFII). Over 603–612 (YRDTPVVKSS) the chain is Cytoplasmic. Residues 613–635 (SRELCYIILAGICLGYLCTFCLI) form a helical membrane-spanning segment. Over 636–643 (AKPKQIYC) the chain is Extracellular. An intrachain disulfide couples cysteine 643 to cysteine 732. A helical membrane pass occupies residues 644 to 666 (YLQRIGIGLSPAMSYSALVTKTN). Residues 667-692 (RIARILAGSKKKICTKKPRFMSACAQ) are Cytoplasmic-facing. Residues 693–713 (LVIAFILICIQLGIIVALFIM) form a helical membrane-spanning segment. Residues 714–736 (EPPDIMHDYPSIREVYLICNTTN) are Extracellular-facing. Asparagine 733 is a glycosylation site (N-linked (GlcNAc...) asparagine). The chain crosses the membrane as a helical span at residues 737–758 (LGVVTPLGYNGLLILSCTFYAF). Residues 759 to 771 (KTRNVPANFNEAK) lie on the Cytoplasmic side of the membrane. A helical membrane pass occupies residues 772 to 794 (YIAFTMYTTCIIWLAFVPIYFGS). At 795-797 (NYK) the chain is on the extracellular side. The chain crosses the membrane as a helical span at residues 798–819 (IITMCFSVSLSATVALGCMFVP). The Cytoplasmic portion of the chain corresponds to 820–1203 (KVYIILAKPE…RDYTQSSSSL (384 aa)). Phosphoserine is present on serine 860. The residue at position 868 (arginine 868) is an Omega-N-methylarginine. Disordered regions lie at residues 892–970 (FTPK…GSGP), 1003–1054 (EESF…GSLM), and 1122–1182 (GAQG…ALCI). Polar residues predominate over residues 905–920 (TMSSSNGKSVTWAQNE). Arginine 924 carries the post-translational modification Omega-N-methylarginine. Positions 1007–1017 (PAAARPRSPSP) are enriched in low complexity. Residues serine 1014 and serine 1016 each carry the phosphoserine modification. 2 stretches are compositionally biased toward polar residues: residues 1039–1054 (HSET…GSLM) and 1165–1176 (DSGSTTPNSPVS).

It belongs to the G-protein coupled receptor 3 family. As to quaternary structure, interacts with RYR1, RYR2, ITPR1, SHANK1 and SHANK3. The PPXXF motif binds HOMER1, HOMER2 and HOMER3. Interacts with SIAH1 and TAMALIN. Interacts with NCDN. Interacts with NECAB2. Interacts with CAMK2A. As to expression, widely distributed in neuronal cells of the central nervous system.

It localises to the cell membrane. G-protein coupled receptor for glutamate. Ligand binding causes a conformation change that triggers signaling via guanine nucleotide-binding proteins (G proteins) and modulates the activity of down-stream effectors. Signaling activates a phosphatidylinositol-calcium second messenger system and generates a calcium-activated chloride current. Plays an important role in the regulation of synaptic plasticity and the modulation of the neural network activity. The polypeptide is Metabotropic glutamate receptor 5 (Grm5) (Rattus norvegicus (Rat)).